Reading from the N-terminus, the 159-residue chain is Ribosomal RNA large subunit methyltransferase H (159 aa).

Residues Leu76, Gly107, and Ile126–Leu131 contribute to the S-adenosyl-L-methionine site.

It belongs to the RNA methyltransferase RlmH family. In terms of assembly, homodimer.

It localises to the cytoplasm. The catalysed reaction is pseudouridine(1915) in 23S rRNA + S-adenosyl-L-methionine = N(3)-methylpseudouridine(1915) in 23S rRNA + S-adenosyl-L-homocysteine + H(+). Its function is as follows. Specifically methylates the pseudouridine at position 1915 (m3Psi1915) in 23S rRNA. This is Ribosomal RNA large subunit methyltransferase H from Cupriavidus metallidurans (strain ATCC 43123 / DSM 2839 / NBRC 102507 / CH34) (Ralstonia metallidurans).